The chain runs to 371 residues: Rab9 effector protein with kelch motifs (371 aa).

Kelch repeat units follow at residues 47–93 (RVLL…FLSA), 98–144 (RLWV…TSSA), 149–201 (CLYV…AVGT), 202–251 (KLFI…VFKD), 252–301 (HLYI…VIPW), and 348–371 (LLLI…SLIE).

Functionally, rab9 effector required for endosome to trans-Golgi network (TGN) transport. This Gallus gallus (Chicken) protein is Rab9 effector protein with kelch motifs (RABEPK).